Reading from the N-terminus, the 271-residue chain is D-methionine-binding lipoprotein MetQ (271 aa).

The signal sequence occupies residues 1-22 (MSLKFKSIAAISALIGTLTLVG). Residue Cys-23 is the site of N-palmitoyl cysteine attachment. A lipid anchor (S-diacylglycerol cysteine) is attached at Cys-23.

The protein belongs to the NlpA lipoprotein family.

It is found in the cell membrane. Its function is as follows. This protein is a component of a D-methionine permease, a binding protein-dependent, ATP-driven transport system. The sequence is that of D-methionine-binding lipoprotein MetQ (metQ) from Yersinia pestis.